We begin with the raw amino-acid sequence, 153 residues long: MAL-like protein (153 aa).

Helical transmembrane passes span 22–42, 59–79, 97–117, and 131–151; these read LFLT…FLVW, VMYV…SYLF, GTTG…TIVS, and AASF…FSIY. The MARVEL domain maps to 22–153; that stretch reads LFLTIPFAFF…ILHAFSIYYH (132 aa).

The protein belongs to the MAL family.

It is found in the membrane. The sequence is that of MAL-like protein (MALL) from Homo sapiens (Human).